The sequence spans 313 residues: Porphobilinogen deaminase (313 aa).

Cys242 carries the S-(dipyrrolylmethanemethyl)cysteine modification.

The protein belongs to the HMBS family. In terms of assembly, monomer. Requires dipyrromethane as cofactor.

It carries out the reaction 4 porphobilinogen + H2O = hydroxymethylbilane + 4 NH4(+). Its pathway is porphyrin-containing compound metabolism; protoporphyrin-IX biosynthesis; coproporphyrinogen-III from 5-aminolevulinate: step 2/4. Its function is as follows. Tetrapolymerization of the monopyrrole PBG into the hydroxymethylbilane pre-uroporphyrinogen in several discrete steps. In Proteus mirabilis, this protein is Porphobilinogen deaminase (hemC).